The following is a 330-amino-acid chain: Small ribosomal subunit protein uS2 (330 aa).

It belongs to the universal ribosomal protein uS2 family.

The polypeptide is Small ribosomal subunit protein uS2 (Bradyrhizobium sp. (strain BTAi1 / ATCC BAA-1182)).